The primary structure comprises 231 residues: Ribosomal RNA small subunit methyltransferase G (231 aa).

S-adenosyl-L-methionine is bound by residues Gly75, Phe80, 126-127, and Arg142; that span reads AE.

It belongs to the methyltransferase superfamily. RNA methyltransferase RsmG family.

It localises to the cytoplasm. In terms of biological role, specifically methylates the N7 position of a guanine in 16S rRNA. This chain is Ribosomal RNA small subunit methyltransferase G, found in Mycoplasma capricolum subsp. capricolum (strain California kid / ATCC 27343 / NCTC 10154).